The primary structure comprises 419 residues: MRKIVINGGLPLQGEITISGAKNSVVALIPAIILADDVVTLDCVPDISDVASLVEIMELMGATVKRYDDVLEIDPRGVQNIPMPYGKINSLRASYYFYGSLLGRFGEATVGLPGGCDLGPRPIDLHLKAFEAMGATASYEGDNMKLSAKDTGLHGASIYMDTVSVGATINTMIAAVKANGRTIIENAAREPEIIDVATLLNNMGAHIRGAGTNIIIIDGVERLHGTRHQVIPDRIEAGTYISLAAAVGKGIRINNVLYEHLEGFVAKLEEMGVRMTVSEDSIFVEEQSNLKAINIKTAPYPGFATDLQQPLTPLLLRANGRGTIVDTIYEKRVNHVFELAKMDADISTTNGHILYTGGRDLRGASVKATDLRAGAALVIAGLMAEGKTEITNIEFILRGYSDIIEKLRNLGADIRLVED.

K22–N23 is a binding site for phosphoenolpyruvate. R92 serves as a coordination point for UDP-N-acetyl-alpha-D-glucosamine. The active-site Proton donor is the C116. At C116 the chain carries 2-(S-cysteinyl)pyruvic acid O-phosphothioketal. UDP-N-acetyl-alpha-D-glucosamine is bound by residues R121 to L125, D306, and I328.

Belongs to the EPSP synthase family. MurA subfamily.

It is found in the cytoplasm. The enzyme catalyses phosphoenolpyruvate + UDP-N-acetyl-alpha-D-glucosamine = UDP-N-acetyl-3-O-(1-carboxyvinyl)-alpha-D-glucosamine + phosphate. Its pathway is cell wall biogenesis; peptidoglycan biosynthesis. Cell wall formation. Adds enolpyruvyl to UDP-N-acetylglucosamine. The chain is UDP-N-acetylglucosamine 1-carboxyvinyltransferase 2 from Streptococcus pneumoniae (strain ATCC BAA-255 / R6).